Consider the following 61-residue polypeptide: Small ribosomal subunit protein uS14 (61 aa).

The Zn(2+) site is built by Cys24, Cys27, Cys40, and Cys43.

Belongs to the universal ribosomal protein uS14 family. Zinc-binding uS14 subfamily. As to quaternary structure, part of the 30S ribosomal subunit. Contacts proteins S3 and S10. Zn(2+) is required as a cofactor.

In terms of biological role, binds 16S rRNA, required for the assembly of 30S particles and may also be responsible for determining the conformation of the 16S rRNA at the A site. The protein is Small ribosomal subunit protein uS14 of Desulfosudis oleivorans (strain DSM 6200 / JCM 39069 / Hxd3) (Desulfococcus oleovorans).